Reading from the N-terminus, the 586-residue chain is uncharacterized protein (586 aa).

The interval 1 to 115 (MRVLVAETGR…NTEKLAGRDD (115 aa)) is disordered. The span at 8–20 (TGREDNVSVHSRE) shows a compositional bias: basic and acidic residues. Positions 21–31 (VSVNGSDSGTG) are enriched in polar residues. Positions 35–44 (YKLETDDEHP) are enriched in basic and acidic residues. Over residues 76–107 (TGMNTEYNDDNSSLVNTPRDSTTYAETNSPNT) the composition is skewed to polar residues. WD repeat units follow at residues 184–223 (QFKESVWASEISKSGKYLATAGKDAIIRVWKVIETPERRE), 253–291 (GHNAEVLSISWSKNDFLLTSSADRTVRLWHPKSTKSLAV), 293–333 (RHNE…ILHW), 335–374 (ELEYVVSTICFYPDGESIVVGMFYGLCAIYETKNLQYVSS), 387–430 (CRVT…LVLK), and 432–474 (SDAH…LINA).

Its subcellular location is the cytoplasm. The protein localises to the nucleus. This is an uncharacterized protein from Schizosaccharomyces pombe (strain 972 / ATCC 24843) (Fission yeast).